We begin with the raw amino-acid sequence, 170 residues long: Transmembrane protein 252 (170 aa).

2 consecutive transmembrane segments (helical) span residues 8-28 and 40-60; these read ILCA…AFFI and LIAA…GIFW. Residues 112–147 are disordered; that stretch reads CPAEREASGIPPPLYTETGLEFQDGNDSHPEAPPSY.

It is found in the membrane. The protein is Transmembrane protein 252 (TMEM252) of Homo sapiens (Human).